The sequence spans 288 residues: Shikimate dehydrogenase (NADP(+)) (288 aa).

Shikimate-binding positions include 15-17 (SKS) and threonine 64. Lysine 68 acts as the Proton acceptor in catalysis. Glutamate 83 lines the NADP(+) pocket. Residues asparagine 92 and aspartate 117 each contribute to the shikimate site. Residues 141–145 (GAGGA), 165–170 (NRTVSK), and methionine 232 contribute to the NADP(+) site. Tyrosine 234 contributes to the shikimate binding site. Residue glycine 254 coordinates NADP(+).

The protein belongs to the shikimate dehydrogenase family. Homodimer.

It carries out the reaction shikimate + NADP(+) = 3-dehydroshikimate + NADPH + H(+). It participates in metabolic intermediate biosynthesis; chorismate biosynthesis; chorismate from D-erythrose 4-phosphate and phosphoenolpyruvate: step 4/7. In terms of biological role, involved in the biosynthesis of the chorismate, which leads to the biosynthesis of aromatic amino acids. Catalyzes the reversible NADPH linked reduction of 3-dehydroshikimate (DHSA) to yield shikimate (SA). The polypeptide is Shikimate dehydrogenase (NADP(+)) (Psychrobacter cryohalolentis (strain ATCC BAA-1226 / DSM 17306 / VKM B-2378 / K5)).